The primary structure comprises 310 residues: Spermatid maturation protein 1 (310 aa).

Residues 29–49 (ILLLLGLIVCINIGINLVTLL) form a helical membrane-spanning segment. The tract at residues 215 to 238 (ALSHKNNAAGSGGCVEGEQAQGQP) is disordered. A coiled-coil region spans residues 262 to 286 (VYDARDVRRRLRELTQEVEALSHCY).

In terms of tissue distribution, testis-specific. Exclusively present in cytoplasm of steps 14-16 elongated spermatids (at protein level).

It is found in the membrane. It localises to the cytoplasm. Functionally, required for proper cytoplasm removal during spermatogenesis. This is Spermatid maturation protein 1 (Spem1) from Mus musculus (Mouse).